Reading from the N-terminus, the 122-residue chain is Large ribosomal subunit protein bL12 (122 aa).

The protein belongs to the bacterial ribosomal protein bL12 family. As to quaternary structure, homodimer. Part of the ribosomal stalk of the 50S ribosomal subunit. Forms a multimeric L10(L12)X complex, where L10 forms an elongated spine to which 2 to 4 L12 dimers bind in a sequential fashion. Binds GTP-bound translation factors.

Functionally, forms part of the ribosomal stalk which helps the ribosome interact with GTP-bound translation factors. Is thus essential for accurate translation. This is Large ribosomal subunit protein bL12 from Streptococcus mutans serotype c (strain ATCC 700610 / UA159).